We begin with the raw amino-acid sequence, 313 residues long: MPAYRPPHIASSEITPKSFYLSRRNFLGTAAGLAAIGLAGREAIAAPLSAKPGAYKLDEKLTPLDAVTSYNNFYEFGVGKSDPKENSGKFKPTPWTVKVDGLVSKPQEFGIEELMKYPLEERTYRMRCVEGWSMVIPWIGFPLSALLDKVEPLGSAKYVSFETVVRPEEMPGQSGLFQPLSWPYVEGLRLDEARHPLTILAVGLYGETLPNQNGAPIRLVVPWKYGFKGIKSIMRISLVEKQPETTWKNSNAREYGFYSNVNPHVDHPRWSQATEQRIGEGGFFGTQNRPTLMFNGYDDVASLYTGLDLKANY.

Positions 1–45 (MPAYRPPHIASSEITPKSFYLSRRNFLGTAAGLAAIGLAGREAIA) form a signal peptide, tat-type signal. Mo-molybdopterin is bound by residues Asn71, 74–75 (YE), Cys128, Thr163, Asn213, Arg218, and 229–231 (GIK).

It belongs to the MsrP family. In terms of assembly, heterodimer of a catalytic subunit (MsrP) and a heme-binding subunit (MsrQ). Mo-molybdopterin serves as cofactor. In terms of processing, predicted to be exported by the Tat system. The position of the signal peptide cleavage has not been experimentally proven.

It is found in the periplasm. It carries out the reaction L-methionyl-[protein] + a quinone + H2O = L-methionyl-(S)-S-oxide-[protein] + a quinol. The enzyme catalyses L-methionyl-[protein] + a quinone + H2O = L-methionyl-(R)-S-oxide-[protein] + a quinol. Part of the MsrPQ system that repairs oxidized periplasmic proteins containing methionine sulfoxide residues (Met-O), using respiratory chain electrons. Thus protects these proteins from oxidative-stress damage caused by reactive species of oxygen and chlorine generated by the host defense mechanisms. MsrPQ is essential for the maintenance of envelope integrity under bleach stress, rescuing a wide series of structurally unrelated periplasmic proteins from methionine oxidation. The catalytic subunit MsrP is non-stereospecific, being able to reduce both (R-) and (S-) diastereoisomers of methionine sulfoxide. This is Protein-methionine-sulfoxide reductase catalytic subunit MsrP from Agrobacterium fabrum (strain C58 / ATCC 33970) (Agrobacterium tumefaciens (strain C58)).